Reading from the N-terminus, the 1671-residue chain is Fatty acid synthase alpha subunit aflA (1671 aa).

Positions 40 to 60 are disordered; sequence ITEEAPTEQPPLSTPPSLPQT. The segment covering 47–58 has biased composition (pro residues); that stretch reads EQPPLSTPPSLP. Residues 75–153 form the Carrier domain; sequence DVALSRVQIV…DANPTVQLGK (79 aa). Residue S113 is modified to O-(pantetheine 4'-phosphoryl)serine. The ketoreductase (KR) domain stretch occupies residues 492-729; it reads GKTFLVTGAG…AMLLTPDFVA (238 aa). The Ketosynthase family 3 (KS3) domain occupies 926-1428; sequence MEVLQEVAVE…QKGGQVVGVA (503 aa). The active-site For beta-ketoacyl synthase activity is C1113. The segment covering 1244-1270 has biased composition (low complexity); that stretch reads SMISVTSRPSSRSSTSSEVSDKSSLTS. Residues 1244-1288 are disordered; sequence SMISVTSRPSSRSSTSSEVSDKSSLTSITSISNPAPRAQRARSTT. Residues H1313 and H1354 each act as for beta-ketoacyl synthase activity in the active site. Positions 1497–1521 are disordered; that stretch reads PSTGQYRFRSDATPALDDDALPPPG. D1552 is a binding site for Mg(2+). Residues 1552–1554, 1598–1608, 1622–1625, and 1652–1654 each bind acetyl-CoA; these read DLV, EAVFKCLQTHS, HGGN, and ISY. S1653 contacts Mg(2+).

It belongs to the thiolase-like superfamily. Fungal fatty acid synthetase subunit alpha family. As to quaternary structure, [Alpha(6)beta(6)] hexamers of two multifunctional subunits (alpha and beta). Post-translationally, 4'-phosphopantetheine is transferred from CoA to a specific serine of the acyl carrier domain by the C-terminal PPT domain. This modification is essential for activity because fatty acids are bound in thioester linkage to the sulfhydryl of the prosthetic group.

The enzyme catalyses acetyl-CoA + n malonyl-CoA + 2n NADPH + 4n H(+) = a long-chain-acyl-CoA + n CoA + n CO2 + 2n NADP(+).. It carries out the reaction a fatty acyl-[ACP] + malonyl-[ACP] + H(+) = a 3-oxoacyl-[ACP] + holo-[ACP] + CO2. It catalyses the reaction a (3R)-hydroxyacyl-[ACP] + NADP(+) = a 3-oxoacyl-[ACP] + NADPH + H(+). It participates in mycotoxin biosynthesis; aflatoxin biosynthesis. In terms of biological role, fatty acid synthase alpha subunit; part of the gene cluster that mediates the biosynthesis of aflatoxins, a group of polyketide-derived furanocoumarins, and part of the most toxic and carcinogenic compounds among the known mycotoxins. The four major aflatoxins produced by A.parasiticus are aflatoxin B1 (AFB1), aflatoxin B2 (AFB2), aflatoxin G1 (AFG1) and aflatoxin G2 (AFG2). Within the aflatoxin pathway, the fungal fatty acid synthase aflA/aflB provides the hexanoyl starter unit to the acyl-carrier protein (ACP) domain of the norsolorinic acid synthase to allow the first step of the pathway. The biosynthesis of aflatoxins begins with the norsolorinic acid synthase aflC that combines a hexanoyl starter unit produced by the fatty acid synthase aflA/aflB and 7 malonyl-CoA extender units to synthesize the precursor NOR. The second step is the conversion of NOR to averantin (AVN) and requires the norsolorinic acid ketoreductase aflD, which catalyzes the dehydration of norsolorinic acid to form (1'S)-averantin. The norsolorinic acid reductases aflE and aflF may also play a role in the conversion of NOR to AVN. The cytochrome P450 monooxygenase aflG then catalyzes the hydroxylation of AVN to 5'hydroxyaverantin (HAVN). The next step is performed by the 5'-hydroxyaverantin dehydrogenase aflH that transforms HAVN to 5'-oxoaverantin (OAVN) which is further converted to averufin (AVF) by aflK that plays a dual role in the pathway, as a 5'-oxoaverantin cyclase that mediates conversion of 5'-oxoaverantin, as well as a versicolorin B synthase in a later step in the pathway. The averufin oxidase aflI catalyzes the conversion of AVF to versiconal hemiacetal acetate (VHA). VHA is then the substrate for the versiconal hemiacetal acetate esterase aflJ to yield versiconal (VAL). Versicolorin B synthase aflK then converts VAL to versicolorin B (VERB) by closing the bisfuran ring of aflatoxin which is required for DNA-binding, thus giving to aflatoxin its activity as a mutagen. Then, the activity of the versicolorin B desaturase aflL leads to versicolorin A (VERA). A branch point starts from VERB since it can also be converted to dihydrodemethylsterigmatocystin (DMDHST), probably also by aflL, VERA being a precursor for aflatoxins B1 and G1, and DMDHST for aflatoxins B2 and G2. Next, the versicolorin reductase aflM and the cytochrome P450 monooxygenase aflN are involved in conversion of VERA to demethylsterigmatocystin (DMST). AflX and aflY seem also involved in this step, through probable aflX-mediated epoxide ring-opening step following versicolorin A oxidation and aflY-mediated Baeyer-Villiger oxidation required for the formation of the xanthone ring. The methyltransferase aflO then leads to the modification of DMST to sterigmatocystin (ST), and of DMDHST to dihydrosterigmatocystin (DHST). Both ST and DHST are then substrates of the O-methyltransferase aflP to yield O-methylsterigmatocystin (OMST) and dihydro-O-methylsterigmatocystin (DHOMST), respectively. Finally OMST is converted to aflatoxins B1 and G1, and DHOMST to aflatoxins B2 and G2, via the action of several enzymes including O-methylsterigmatocystin oxidoreductase aflQ, the cytochrome P450 monooxygenase aflU, but also the NADH-dependent flavin oxidoreductase nadA which is specifically required for the synthesis of AFG1. The sequence is that of Fatty acid synthase alpha subunit aflA from Aspergillus parasiticus (strain ATCC 56775 / NRRL 5862 / SRRC 143 / SU-1).